Consider the following 536-residue polypeptide: MERSGSGVLSRSRAKTVTNGNSQHSEEESSDEEHPNDSMIRVGGDYQAQIPEFKPDCASRYGEKDQRSMLVWSPNSQVSDAMLDEYILMAKEKHGYNMEQALGMLLWHKHDVEKSLADLANFTPFPDEWTVEDKVLFEQAFSFHGKSFHRIQQMLPDKMITSLVKYYYSWKKTRTRTSVMDRQARKLLSKREKNESNDEIEEGDPGSDSDFEINAKKESAKQNSGNGGGNEKGPSKSCLTRKENQSAQYRHHPLRARRRPPKGMHLEQEDIVALSASTDSGAVTIRQLDTQLVSLKRQVQKIKQTNSVLRNNLGDGIEDMRPREPNQKINSRWTTEEQLLAVQAVRRYGKDFAAIADVIGNKTVAQVSSFFVSYRRRFNLEEVLREWQAEQEVQGSSGRTVNTELNGSAELEDDEVKMDGISPPHSDSPLPSSEGSASGNHSSAQSSPPLTQPPPLLRPAPPSAPPSLLRQPPPLQTRPLQNRTPHNHPPPPLIRPAIASTLHQGALRNSLSSSSSSAGQLPPSLVGLKVESPQSH.

The disordered stretch occupies residues 1 to 44 (MERSGSGVLSRSRAKTVTNGNSQHSEEESSDEEHPNDSMIRVGG). The span at 24-36 (HSEEESSDEEHPN) shows a compositional bias: basic and acidic residues. The ELM2 domain maps to 38–123 (SMIRVGGDYQ…KSLADLANFT (86 aa)). Positions 124–175 (PFPDEWTVEDKVLFEQAFSFHGKSFHRIQQMLPDKMITSLVKYYYSWKKTRT) constitute an SANT 1 domain. A disordered region spans residues 179–264 (VMDRQARKLL…RARRRPPKGM (86 aa)). The segment covering 197–211 (NDEIEEGDPGSDSDF) has biased composition (acidic residues). Positions 249 to 262 (YRHHPLRARRRPPK) are enriched in basic residues. A coiled-coil region spans residues 283–315 (VTIRQLDTQLVSLKRQVQKIKQTNSVLRNNLGD). Positions 328-379 (KINSRWTTEEQLLAVQAVRRYGKDFAAIADVIGNKTVAQVSSFFVSYRRRFN) constitute an SANT 2 domain. The segment at 389–536 (AEQEVQGSSG…GLKVESPQSH (148 aa)) is disordered. Residues 391–406 (QEVQGSSGRTVNTELN) show a composition bias toward polar residues. The span at 422–449 (SPPHSDSPLPSSEGSASGNHSSAQSSPP) shows a compositional bias: low complexity. The span at 450 to 476 (LTQPPPLLRPAPPSAPPSLLRQPPPLQ) shows a compositional bias: pro residues.

Belongs to the CoREST family.

The protein resides in the nucleus. In terms of biological role, may act as a component of a corepressor complex that represses transcription. The protein is REST corepressor 2 (rcor2) of Danio rerio (Zebrafish).